The primary structure comprises 80 residues: RNA-binding protein KhpA (80 aa).

One can recognise a KH domain in the interval 33-80 (GRTVEVHVHPDDLGKVIGRGGRTATALRKLVAGIGGRGIRVDVVDTDQ).

The protein belongs to the KhpA RNA-binding protein family.

The protein localises to the cytoplasm. In terms of biological role, a probable RNA-binding protein. This Mycobacterium leprae (strain TN) protein is RNA-binding protein KhpA.